Reading from the N-terminus, the 624-residue chain is (-)-beta-phellandrene synthase 2, chloroplastic (624 aa).

Residues 1-47 (MALVSVAPLVSMRRSLFSSPYELKSIDKTIPNLVMCRKRMLGRPSIR) constitute a chloroplast transit peptide. Residues D375, D379, and D527 each coordinate Mg(2+). Positions 375–379 (DDIYD) match the DDXXD motif motif.

This sequence belongs to the terpene synthase family. Tpsd subfamily. The cofactor is Mg(2+). Mn(2+) serves as cofactor.

It localises to the plastid. It is found in the chloroplast. The enzyme catalyses (2E)-geranyl diphosphate = (-)-beta-phellandrene + diphosphate. Its pathway is terpene metabolism; oleoresin biosynthesis. It participates in secondary metabolite biosynthesis; terpenoid biosynthesis. Functionally, monoterpene synthase (TPS) involved in the biosynthesis of monoterpene natural products included in conifer oleoresin secretions and volatile emissions; these compounds contribute to biotic and abiotic stress defense against herbivores and pathogens. Catalyzes the conversion of (2E)-geranyl diphosphate (GPP) to (-)-beta-phellandrene. The polypeptide is (-)-beta-phellandrene synthase 2, chloroplastic (Pinus contorta (Shore pine)).